Here is a 201-residue protein sequence, read N- to C-terminus: Recombination protein RecR (201 aa).

A C4-type zinc finger spans residues 60-75 (CSRCGNVDTVDPCTVC). The Toprim domain occupies 83–178 (SVIIVVEDVS…KITRLAHGVP (96 aa)).

Belongs to the RecR family.

Its function is as follows. May play a role in DNA repair. It seems to be involved in an RecBC-independent recombinational process of DNA repair. It may act with RecF and RecO. The protein is Recombination protein RecR of Rhizobium etli (strain ATCC 51251 / DSM 11541 / JCM 21823 / NBRC 15573 / CFN 42).